Here is a 111-residue protein sequence, read N- to C-terminus: Cryptic phage CTXphi transcriptional repressor RstR (111 aa).

Residues 6 to 60 (IRDLRVERDLNQEEVANGIGVGKNTYLAYEKGTQSPKLETVEKLAKFYGVPIAEL) enclose the HTH cro/C1-type domain. The H-T-H motif DNA-binding region spans 17–36 (QEEVANGIGVGKNTYLAYEK).

Its function is as follows. Transcriptional repressor of the integrated CTXPhi phage gene rstA2. The chain is Cryptic phage CTXphi transcriptional repressor RstR (rstR) from Vibrio cholerae.